Consider the following 167-residue polypeptide: MVPPEEIASASNPDIEGENILHFLCREGDITDLMAFKNVISDANRHLVLQFNRHGKQCVHIVSNPGIADPQEKLKLLMEWGADINGQERVFGNTPLHIAAYTQNHKLATWLCNQPGINMGISNYLFKTPYYVACERHDIKIMNILRAKGGQCRIYRCNEAWLFTRNY.

ANK repeat units follow at residues 54-86, 91-121, and 125-154; these read HGKQ…DING, FGNT…NMGI, and LFKT…QCRI.

It belongs to the polydnaviridae I-Kappa-B-like protein family.

In terms of biological role, suppresses the host immune response through NF-kappa-B inactivation. Possesses ankyrin repeat domains required for NF-kappa-B binding but lacks the regulatory regions required for dissociation from NF-kappa-B and degradation. Therefore, prevents host NF-kappa-B release and subsequent activation. The protein is I-Kappa-B like protein I1 (I1) of Microplitis demolitor (Parasitoid wasp).